Reading from the N-terminus, the 57-residue chain is Potassium channel toxin alpha-KTx 8.2 (57 aa).

An N-terminal signal peptide occupies residues M1–A28. Cystine bridges form between C31-C47, C34-C52, and C38-C54.

Belongs to the short scorpion toxin superfamily. Potassium channel inhibitor family. Alpha-KTx 08 subfamily. As to expression, expressed by the venom gland.

It localises to the secreted. Its function is as follows. This toxin inhibits rKv1.1/KCNA1 (100% inhibition at 3 uM), Kv1.3/KCNA3 (human, mouse and rat) (IC(50)=269-467 nM), shaker IR (60% at 3 uM) and activates the mouse capsaicin receptor TRPV1 (EC(50)=132 uM, at 20 degrees Celsius), a non-selective cation channel expressed by sensory neurons of the pain pathway. In vivo, intraplantar injection of this toxin in WT mice hind paw shows significant acute pain, whereas no pain is observed when the toxin is injected into TRPV1 KO mice. In addition, subcutaneous injection into mice (185 mg) produces an excitation of the animal, but no lethality, whereas injection into cockroaches does not provoke lethality as well. This chain is Potassium channel toxin alpha-KTx 8.2, found in Olivierus martensii (Manchurian scorpion).